We begin with the raw amino-acid sequence, 363 residues long: Flagellar P-ring protein 2 (363 aa).

Positions 1–18 are cleaved as a signal peptide; that stretch reads MLIRLLLLVICLAGPGVA.

The protein belongs to the FlgI family. The basal body constitutes a major portion of the flagellar organelle and consists of four rings (L,P,S, and M) mounted on a central rod.

Its subcellular location is the periplasm. The protein resides in the bacterial flagellum basal body. Functionally, assembles around the rod to form the L-ring and probably protects the motor/basal body from shearing forces during rotation. This Cereibacter sphaeroides (strain ATCC 17023 / DSM 158 / JCM 6121 / CCUG 31486 / LMG 2827 / NBRC 12203 / NCIMB 8253 / ATH 2.4.1.) (Rhodobacter sphaeroides) protein is Flagellar P-ring protein 2.